Consider the following 1005-residue polypeptide: DNA polymerase (1005 aa).

This sequence belongs to the DNA polymerase type-B family. In terms of assembly, interacts with OPG148. Component of the Uracil-DNA glycosylase(UDG)-OPG148-polymerase complex; OPG148 and OPG116/UDG form a heterodimeric processivity factor that associates with OPG071 to form the processive polymerase holoenzyme.

The enzyme catalyses DNA(n) + a 2'-deoxyribonucleoside 5'-triphosphate = DNA(n+1) + diphosphate. Functionally, catalyzes DNA synthesis. Acquires processivity by associating with a heterodimeric processivity factor comprised of the viral OPG148 and OPG116 proteins, thereby forming the DNA polymerase holoenzyme. Displays 3'- to 5' exonuclease activity. Might participate in viral DNA recombination. Does not perform OPG116/D4synthesis across an abasic site. This Variola virus (isolate Human/India/Ind3/1967) (VARV) protein is DNA polymerase (OPG071).